We begin with the raw amino-acid sequence, 377 residues long: Secreted LysM effector Lys2 (377 aa).

An N-terminal signal peptide occupies residues 1–22 (MVRQSIGLIALQLLNLVSVAQA). The span at 104-119 (TSSSTATTTSQKPTAT) shows a compositional bias: low complexity. Residues 104–124 (TSSSTATTTSQKPTATVSPLP) form a disordered region. LysM domains follow at residues 135 to 182 (KYYN…YVCV) and 207 to 253 (KYYK…YYCV).

It belongs to the secreted LysM effector family.

Functionally, might have a role in sequestration of chitin oligosaccharides (breakdown products of fungal cell walls that are released during invasion and act as triggers of host immunity) to dampen host defense. The chain is Secreted LysM effector Lys2 from Pochonia chlamydosporia (strain 123) (Metacordyceps chlamydosporia).